Consider the following 569-residue polypeptide: Urease subunit alpha (569 aa).

Positions 131 to 569 constitute a Urease domain; that stretch reads GAIDSHIHFI…LPLAQRYLLL (439 aa). 3 residues coordinate Ni(2+): H136, H138, and K219. An N6-carboxylysine modification is found at K219. H221 contributes to the substrate binding site. Ni(2+)-binding residues include H248 and H274. Residue H322 is the Proton donor of the active site. A Ni(2+)-binding site is contributed by D362.

The protein belongs to the metallo-dependent hydrolases superfamily. Urease alpha subunit family. Heterotrimer of UreA (gamma), UreB (beta) and UreC (alpha) subunits. Three heterotrimers associate to form the active enzyme. Ni cation is required as a cofactor. In terms of processing, carboxylation allows a single lysine to coordinate two nickel ions.

Its subcellular location is the cytoplasm. It carries out the reaction urea + 2 H2O + H(+) = hydrogencarbonate + 2 NH4(+). Its pathway is nitrogen metabolism; urea degradation; CO(2) and NH(3) from urea (urease route): step 1/1. The chain is Urease subunit alpha from Prochlorococcus marinus (strain NATL1A).